We begin with the raw amino-acid sequence, 330 residues long: Src kinase-associated phosphoprotein 2-A (330 aa).

The segment at 53–77 (QDFQDKAETDDQEENDGFSLPPDAV) is disordered. The PH domain occupies 105–208 (DYLRAGYLEK…WINVIMNARG (104 aa)). Residues 228 to 261 (SHEEDIYEELPEESEKPVTGSETPKATPVPVNNT) are disordered. The span at 247-261 (GSETPKATPVPVNNT) shows a compositional bias: polar residues. One can recognise an SH3 domain in the interval 268–329 (DYANFYRGLW…PKAYIIEMYD (62 aa)).

Belongs to the SKAP family. Post-translationally, phosphorylated on tyrosines.

It is found in the cytoplasm. Its function is as follows. May be involved in B-cell and macrophage adhesion processes. May play a role in src signaling pathway. The polypeptide is Src kinase-associated phosphoprotein 2-A (skap2-a) (Xenopus laevis (African clawed frog)).